The primary structure comprises 149 residues: Urease accessory protein UreE (149 aa).

This sequence belongs to the UreE family.

Its subcellular location is the cytoplasm. Involved in urease metallocenter assembly. Binds nickel. Probably functions as a nickel donor during metallocenter assembly. The polypeptide is Urease accessory protein UreE (Ureaplasma parvum serovar 3 (strain ATCC 700970)).